A 741-amino-acid polypeptide reads, in one-letter code: G2 and S phase-expressed protein 1 (741 aa).

At S73 the chain carries Phosphoserine. Disordered regions lie at residues 101–120 (EVAQ…ETFV), 131–428 (EKEQ…KTVS), and 450–512 (FKVP…STRR). The span at 106–120 (ATPQNPVNQGKETFV) shows a compositional bias: polar residues. Residues 131-147 (EKEQKRDRSPMSLKRET) show a composition bias toward basic and acidic residues. Phosphoserine is present on residues S139, S153, S191, and S245. Positions 173 to 209 (SPVSAGPAQTQSNQGLPCSSQPLPRESSTSQPPSQAG) are enriched in polar residues. The segment covering 246–261 (IQRTKLVNEKGSQSDV) has biased composition (polar residues). The segment covering 310–321 (SSTSGSASSLES) has biased composition (low complexity). At S311 the chain carries Phosphoserine. Residues 337–355 (QRSSIPASGSQRRTSTSKS) show a composition bias toward polar residues. Low complexity predominate over residues 360–372 (PAASRQALPAAPA). Over residues 398-408 (SPLTQQPQTPE) the composition is skewed to polar residues. A Phosphoserine modification is found at S460. Residue T465 is modified to Phosphothreonine. Phosphoserine is present on residues S476, S493, S509, and S514. The span at 478–497 (TPASRVVSSTPVRRSSGTTP) shows a compositional bias: low complexity. A Phosphothreonine modification is found at T518. A phosphoserine mark is found at S521, S541, S582, and S599. The disordered stretch occupies residues 550-640 (LSSEPRRRST…VHGGGCSHTP (91 aa)). The segment covering 578-593 (QGLSSDESSSPPSSVP) has biased composition (low complexity). T696 is modified (phosphothreonine). Residues S720, S726, and S736 each carry the phosphoserine modification.

Post-translationally, phosphorylated in mitosis.

It is found in the cytoplasm. The protein resides in the cytoskeleton. May be involved in p53-induced cell cycle arrest in G2/M phase by interfering with microtubule rearrangements that are required to enter mitosis. Overexpression delays G2/M phase progression. This is G2 and S phase-expressed protein 1 (Gtse1) from Mus musculus (Mouse).